A 65-amino-acid polypeptide reads, in one-letter code: Large ribosomal subunit protein uL29 (65 aa).

It belongs to the universal ribosomal protein uL29 family.

The chain is Large ribosomal subunit protein uL29 from Dehalococcoides mccartyi (strain ATCC BAA-2100 / JCM 16839 / KCTC 5957 / BAV1).